The sequence spans 70 residues: DNA-directed RNA polymerase subunit epsilon (70 aa).

It belongs to the RNA polymerase subunit epsilon family. As to quaternary structure, RNAP is composed of a core of 2 alpha, a beta and a beta' subunit. The core is associated with a delta subunit, and at least one of epsilon or omega. When a sigma factor is associated with the core the holoenzyme is formed, which can initiate transcription.

The catalysed reaction is RNA(n) + a ribonucleoside 5'-triphosphate = RNA(n+1) + diphosphate. Functionally, a non-essential component of RNA polymerase (RNAP). The chain is DNA-directed RNA polymerase subunit epsilon from Enterococcus faecalis (strain ATCC 700802 / V583).